The sequence spans 110 residues: HTH-type transcriptional regulator TnrA (110 aa).

Residues 13-81 enclose the HTH merR-type domain; it reads VISIGIVSEL…TAEILKDMRK (69 aa). Residues 16 to 35 constitute a DNA-binding region (H-T-H motif); that stretch reads IGIVSELTGLSVRQIRYYEE.

As to quaternary structure, homodimer. Under conditions of nitrogen excess, TnrA forms a stable complex with feedback-inhibited GlnA. Interacts with GlnK-AmtB complex.

It localises to the cell membrane. Under conditions of nitrogen excess, the DNA-binding activity is inhibited by the formation of a stable complex with feedback-inhibited GlnA. The presence of glutamine and AMP increases the inhibitory activity of glutamine synthetase by more than 1000-fold. Its function is as follows. Transcription regulator that actives the transcription of genes required for nitrogen assimilation such as nrgAB (ammonium transport), nasABCDEF (nitrate/nitrite assimilation), ureABC (urea degradation) and gabP (GABA transport), during nitrogen limitation. Also represses glnRA and gltAB in the absence of ammonium. On the contrary of the MerR members, which require longer DNA sites for high-affinity binding, TnrA requires a DNA sequence of 17 nucleotides as minimal binding site. This chain is HTH-type transcriptional regulator TnrA, found in Bacillus subtilis (strain 168).